The primary structure comprises 182 residues: Photosystem I assembly protein Ycf4 (182 aa).

The next 2 helical transmembrane spans lie at 22 to 42 (WSSVIFLGASGFLLTGLSSYL) and 63 to 83 (VMCFYGILGLIFSVYLGLTIF).

It belongs to the Ycf4 family.

It localises to the plastid. It is found in the chloroplast thylakoid membrane. Functionally, seems to be required for the assembly of the photosystem I complex. In Oltmannsiellopsis viridis (Marine flagellate), this protein is Photosystem I assembly protein Ycf4.